Reading from the N-terminus, the 396-residue chain is Tryptophan synthase beta chain (396 aa).

N6-(pyridoxal phosphate)lysine is present on lysine 86.

This sequence belongs to the TrpB family. In terms of assembly, tetramer of two alpha and two beta chains. Pyridoxal 5'-phosphate serves as cofactor.

It catalyses the reaction (1S,2R)-1-C-(indol-3-yl)glycerol 3-phosphate + L-serine = D-glyceraldehyde 3-phosphate + L-tryptophan + H2O. It participates in amino-acid biosynthesis; L-tryptophan biosynthesis; L-tryptophan from chorismate: step 5/5. In terms of biological role, the beta subunit is responsible for the synthesis of L-tryptophan from indole and L-serine. This chain is Tryptophan synthase beta chain, found in Vibrio vulnificus (strain CMCP6).